The chain runs to 249 residues: 2,3-bisphosphoglycerate-dependent phosphoglycerate mutase (249 aa).

Residues 8–15 (RHGESTWN), 21–22 (TG), Arg-60, 87–90 (ERHY), Lys-98, 114–115 (RR), and 183–184 (GN) contribute to the substrate site. The active-site Tele-phosphohistidine intermediate is the His-9. Residue Glu-87 is the Proton donor/acceptor of the active site.

It belongs to the phosphoglycerate mutase family. BPG-dependent PGAM subfamily. In terms of assembly, homodimer.

It carries out the reaction (2R)-2-phosphoglycerate = (2R)-3-phosphoglycerate. Its pathway is carbohydrate degradation; glycolysis; pyruvate from D-glyceraldehyde 3-phosphate: step 3/5. In terms of biological role, catalyzes the interconversion of 2-phosphoglycerate and 3-phosphoglycerate. This Aromatoleum aromaticum (strain DSM 19018 / LMG 30748 / EbN1) (Azoarcus sp. (strain EbN1)) protein is 2,3-bisphosphoglycerate-dependent phosphoglycerate mutase.